The sequence spans 221 residues: Putative transmembrane protein ORF25 (221 aa).

The signal sequence occupies residues 1–23 (MTLAAKLIVLVYVALCFVNESTS). Asparagine 19 and asparagine 179 each carry an N-linked (GlcNAc...) asparagine; by host glycan. At 24 to 191 (QDHSNIYHET…LAKARGVPMS (168 aa)) the chain is on the extracellular side. A helical membrane pass occupies residues 192-212 (VSVISGICAIILVIFPIFITI). Residues 213–221 (ANLRRVYLH) are Cytoplasmic-facing.

The protein localises to the host membrane. The chain is Putative transmembrane protein ORF25 from Ostreid herpesvirus 1 (isolate France) (OsHV-1).